Reading from the N-terminus, the 241-residue chain is Adenosine 5'-phosphosulfate reductase (241 aa).

[4Fe-4S] cluster-binding residues include cysteine 122, cysteine 123, cysteine 205, and cysteine 208. The active-site Nucleophile; cysteine thiosulfonate intermediate is the cysteine 231.

It belongs to the PAPS reductase family. CysH subfamily. It depends on [4Fe-4S] cluster as a cofactor.

Its subcellular location is the cytoplasm. It carries out the reaction [thioredoxin]-disulfide + sulfite + AMP + 2 H(+) = adenosine 5'-phosphosulfate + [thioredoxin]-dithiol. It participates in sulfur metabolism; hydrogen sulfide biosynthesis; sulfite from sulfate. Functionally, catalyzes the formation of sulfite from adenosine 5'-phosphosulfate (APS) using thioredoxin as an electron donor. The chain is Adenosine 5'-phosphosulfate reductase from Shouchella clausii (strain KSM-K16) (Alkalihalobacillus clausii).